We begin with the raw amino-acid sequence, 299 residues long: Putative syntaxin-2 (299 aa).

Residues 1-270 (MRDRLNEFQS…SAMRKKICVA (270 aa)) lie on the Cytoplasmic side of the membrane. A coiled-coil region spans residues 112–146 (EKRMRQNQLELLKDNLNKLINLFNETHQDYKSRVS). One can recognise a t-SNARE coiled-coil homology domain in the interval 193 to 255 (YEDVKKRHGE…KQGSANVKTA (63 aa)). The chain crosses the membrane as a helical; Anchor for type IV membrane protein span at residues 271 to 291 (AILITILLILIIVAIILAVVL). Residues 292 to 299 (SRGNNNNK) are Extracellular-facing.

It belongs to the syntaxin family.

It localises to the membrane. Potentially involved in docking of synaptic vesicles at presynaptic active zones. The chain is Putative syntaxin-2 (syx-2) from Caenorhabditis elegans.